The primary structure comprises 530 residues: Type 2 DNA topoisomerase 6 subunit B (530 aa).

Residues asparagine 42, aspartate 76, 97–98 (SK), 106–113 (GMYGLGVK), and lysine 427 contribute to the ATP site.

Belongs to the TOP6B family. In terms of assembly, homodimer. Heterotetramer of two Top6A and two Top6B chains.

It carries out the reaction ATP-dependent breakage, passage and rejoining of double-stranded DNA.. Its function is as follows. Relaxes both positive and negative superturns and exhibits a strong decatenase activity. The sequence is that of Type 2 DNA topoisomerase 6 subunit B from Saccharolobus islandicus (strain M.16.4 / Kamchatka #3) (Sulfolobus islandicus).